A 211-amino-acid polypeptide reads, in one-letter code: WW domain-containing protein WWM1 (211 aa).

A WW domain is found at 9–43; that stretch reads PQVPSGWKAVFDDEYQTWYYVDLSTNSSQWEPPRG. Residues 32 to 116 form a disordered region; the sequence is STNSSQWEPP…QRYYPQQAPM (85 aa). Glycyl lysine isopeptide (Lys-Gly) (interchain with G-Cter in ubiquitin) cross-links involve residues Lys50 and Lys60. Ser75 carries the phosphoserine modification. Thr78 bears the Phosphothreonine mark. Over residues 80–116 the composition is skewed to low complexity; the sequence is QVQAGAQAQQPRYYQPQQPQYPQYPQQQRYYPQQAPM.

Interacts with metacaspase MCA1.

Its subcellular location is the cytoplasm. It is found in the nucleus. The protein localises to the mitochondrion. Its function is as follows. Involved in apoptosis. May play a role in nuclear function controlling cellular proliferation coupled to mitochondrial biogenesis. Causes impaired growth when overexpressed. This Saccharomyces cerevisiae (strain ATCC 204508 / S288c) (Baker's yeast) protein is WW domain-containing protein WWM1 (WWM1).